The primary structure comprises 382 residues: uncharacterized protein (382 aa).

Transmembrane regions (helical) follow at residues 8-28 (VLLL…LNTL), 41-61 (WQVG…TLIA), 73-93 (SYHY…LSVD), 94-114 (FWSW…IWVI), 133-153 (AAYM…LGVV), 157-177 (LLSV…PLLF), 208-228 (GCII…LYLS), 235-255 (ASVG…QWPI), 274-294 (VVIL…ALFI), 295-315 (LGCA…EKVS), 325-345 (ALLM…SLLM), and 349-369 (SDNL…MMLL).

This sequence belongs to the major facilitator superfamily. YcaD (TC 2.A.1.26) family.

Its subcellular location is the cell inner membrane. This is an uncharacterized protein from Yersinia enterocolitica serotype O:8 / biotype 1B (strain NCTC 13174 / 8081).